The sequence spans 290 residues: Ribosomal RNA small subunit methyltransferase A (290 aa).

Asparagine 27, leucine 29, glycine 54, glutamate 75, aspartate 100, and asparagine 125 together coordinate S-adenosyl-L-methionine.

This sequence belongs to the class I-like SAM-binding methyltransferase superfamily. rRNA adenine N(6)-methyltransferase family. RsmA subfamily.

The protein resides in the cytoplasm. It carries out the reaction adenosine(1518)/adenosine(1519) in 16S rRNA + 4 S-adenosyl-L-methionine = N(6)-dimethyladenosine(1518)/N(6)-dimethyladenosine(1519) in 16S rRNA + 4 S-adenosyl-L-homocysteine + 4 H(+). Specifically dimethylates two adjacent adenosines (A1518 and A1519) in the loop of a conserved hairpin near the 3'-end of 16S rRNA in the 30S particle. May play a critical role in biogenesis of 30S subunits. The sequence is that of Ribosomal RNA small subunit methyltransferase A from Streptococcus pyogenes serotype M1.